The chain runs to 265 residues: Undecaprenyl-diphosphatase (265 aa).

A run of 7 helical transmembrane segments spans residues 42–62 (ATTF…VLYW), 82–102 (GIML…AAHS), 108–128 (LFTP…MLLV), 143–163 (MSPA…WPGF), 181–201 (GLAA…ATGY), 221–241 (GFVV…ALVG), and 248–264 (FAWY…YFMA).

It belongs to the UppP family.

Its subcellular location is the cell inner membrane. The catalysed reaction is di-trans,octa-cis-undecaprenyl diphosphate + H2O = di-trans,octa-cis-undecaprenyl phosphate + phosphate + H(+). Functionally, catalyzes the dephosphorylation of undecaprenyl diphosphate (UPP). Confers resistance to bacitracin. The protein is Undecaprenyl-diphosphatase of Nitratidesulfovibrio vulgaris (strain ATCC 29579 / DSM 644 / CCUG 34227 / NCIMB 8303 / VKM B-1760 / Hildenborough) (Desulfovibrio vulgaris).